We begin with the raw amino-acid sequence, 485 residues long: Inosine-5'-monophosphate dehydrogenase (485 aa).

CBS domains are found at residues 99 to 154 and 156 to 215; these read IVED…LVKE and MTKD…VRDE. NAD(+) contacts are provided by residues aspartate 247 and 294–296; that span reads GIG. Residues glycine 296 and glycine 298 each contribute to the K(+) site. Serine 299 contacts IMP. Residue cysteine 301 participates in K(+) binding. The active-site Thioimidate intermediate is cysteine 301. IMP contacts are provided by residues 334 to 336, 357 to 358, and 381 to 385; these read DGG, GN, and YRGMG. Arginine 397 serves as the catalytic Proton acceptor. Glutamate 412 provides a ligand contact to IMP. K(+) is bound by residues glutamate 466, serine 467, and histidine 468.

This sequence belongs to the IMPDH/GMPR family. In terms of assembly, homotetramer. K(+) is required as a cofactor.

The catalysed reaction is IMP + NAD(+) + H2O = XMP + NADH + H(+). The protein operates within purine metabolism; XMP biosynthesis via de novo pathway; XMP from IMP: step 1/1. Its activity is regulated as follows. Mycophenolic acid (MPA) is a non-competitive inhibitor that prevents formation of the closed enzyme conformation by binding to the same site as the amobile flap. In contrast, mizoribine monophosphate (MZP) is a competitive inhibitor that induces the closed conformation. MPA is a potent inhibitor of mammalian IMPDHs but a poor inhibitor of the bacterial enzymes. MZP is a more potent inhibitor of bacterial IMPDH. Its function is as follows. Catalyzes the conversion of inosine 5'-phosphate (IMP) to xanthosine 5'-phosphate (XMP), the first committed and rate-limiting step in the de novo synthesis of guanine nucleotides, and therefore plays an important role in the regulation of cell growth. In Pyrococcus abyssi (strain GE5 / Orsay), this protein is Inosine-5'-monophosphate dehydrogenase.